An 89-amino-acid chain; its full sequence is Small ribosomal subunit protein uS15 (89 aa).

A compositionally biased stretch (basic and acidic residues) spans 1–13; that stretch reads MYLTSEKKEEIFS. A disordered region spans residues 1–24; the sequence is MYLTSEKKEEIFSKHGKGKNDTGS.

The protein belongs to the universal ribosomal protein uS15 family. As to quaternary structure, part of the 30S ribosomal subunit. Forms a bridge to the 50S subunit in the 70S ribosome, contacting the 23S rRNA.

One of the primary rRNA binding proteins, it binds directly to 16S rRNA where it helps nucleate assembly of the platform of the 30S subunit by binding and bridging several RNA helices of the 16S rRNA. Functionally, forms an intersubunit bridge (bridge B4) with the 23S rRNA of the 50S subunit in the ribosome. The sequence is that of Small ribosomal subunit protein uS15 from Christiangramia forsetii (strain DSM 17595 / CGMCC 1.15422 / KT0803) (Gramella forsetii).